Here is a 461-residue protein sequence, read N- to C-terminus: Piperine synthase (461 aa).

Residues histidine 168 and aspartate 387 each act as proton acceptor in the active site. The short motif at 459-461 is the Microbody targeting signal element; it reads SRM.

It belongs to the plant acyltransferase family. Monomer. Confined to immature fruits perisperm. Also detectable in roots.

It localises to the cytoplasm. It catalyses the reaction piperidine + (E,E)-piperoyl-CoA = piperine + CoA + H(+). It carries out the reaction pyrrolidine + (E,E)-piperoyl-CoA = piperyline + CoA + H(+). The catalysed reaction is (E,E)-piperoyl-CoA + 2-methylpropan-1-amine = (E,E)-piperlonguminine + CoA + H(+). Its pathway is aromatic compound metabolism. Its function is as follows. Involved in the biosynthesis of aromatic piperamides natural products such as piperine (1-piperoyl-piperidine), the pungent principle contributing, together with several terpenoids, to the aromatic properties of black pepper fruits, and displaying numerous pharmacological activities such as antiproliferative, antitumor, antiangiogenesis, antioxidant, antidiabetic, antiobesity, cardioprotective, antimicrobial, antiaging, and immunomodulatory effects. Mediates mainly the conversion of piperidine and piperoyl-CoA to piperine. Can also use pyrrolidine and isobutylamine as acceptors and 3,4-methylenedioxycinnamoyl-CoA as an alternative CoA-donor with a lower efficiency. This Piper nigrum (Black pepper) protein is Piperine synthase.